A 412-amino-acid polypeptide reads, in one-letter code: MVAAAASSAFFSFPTPGTSPKPGKFGNWPSSLSIPFNPKSNHNGGIQVKANASAHPKANGSAVSLKAGSLETQEDTSSPSPPPRTFISQLPDWSMLVSAITTVFVAAEKQWTMLDRKSKRPDVLVEPFVQDGVSFRQSFSIRSYEIGVDRTASIETLMNIFQETSLNHCKSLGLLNDGFGRTPEMCKRDLIWVVTKMQIEVNRYPTWGDTIEVTTWVSESGKNGMSRDWLISDCHSGEILIRATSVWAMMNQKTRRLSKIPDEVRQEIVPYFVDSAPVIEDDRKLHKLDVKTGDSIRNGLTPRWNDFDVNQHVNNVKYIAWLLKSVPTEVFETQELCGLTLEYRRECRRDSVLESVTAMDPSKEGDRSLYQHLLRLENGADIALGRTEWRPKNAGATGAVSTGKTSNGNSVS.

Residues 1–25 (MVAAAASSAFFSFPTPGTSPKPGKF) are compositionally biased toward low complexity. Residues 1 to 50 (MVAAAASSAFFSFPTPGTSPKPGKFGNWPSSLSIPFNPKSNHNGGIQVKA) constitute a chloroplast transit peptide. Residues 1–63 (MVAAAASSAF…AHPKANGSAV (63 aa)) are disordered. The segment covering 28–44 (WPSSLSIPFNPKSNHNG) has biased composition (polar residues). Active-site residues include Asn-310, His-312, and Cys-347. The tract at residues 393-412 (NAGATGAVSTGKTSNGNSVS) is disordered. The span at 399-412 (AVSTGKTSNGNSVS) shows a compositional bias: polar residues.

The protein belongs to the acyl-ACP thioesterase family.

It localises to the plastid. Its subcellular location is the chloroplast. It carries out the reaction tetradecanoyl-[ACP] + H2O = tetradecanoate + holo-[ACP] + H(+). Plays an essential role in chain termination during de novo fatty acid synthesis. Possesses thioesterase activity for medium chain acyl-ACPs. Main substrate is 14:0. This chain is Acyl-[acyl-carrier-protein] hydrolase FATB3, chloroplastic, found in Cuphea viscosissima (Blue waxweed).